The following is a 501-amino-acid chain: Pyruvate dehydrogenase protein X component, mitochondrial (501 aa).

Residues 1 to 53 (MAASWRLHCNQPLLRYLLGFSSRRSLGLAQGAAAWPVDRGASWRWFHSTQLLQ) constitute a mitochondrion transit peptide. The Lipoyl-binding domain maps to 56–132 (PIKVLMPSLS…QLGSLIALMV (77 aa)). Position 97 is an N6-lipoyllysine (lysine 97). The tract at residues 145–176 (KDVSAPPPVSKPPAPTQPSPQPQIPCPARKEH) is disordered. Residues 149–169 (APPPVSKPPAPTQPSPQPQIP) show a composition bias toward pro residues. Residues 183–220 (RLSPAARNILEKHSLDASQGTATGPRGIFTKEDALKLV) form the Peripheral subunit-binding (PSBD) domain. Position 194 is an N6-acetyllysine (lysine 194). At serine 196 the chain carries Phosphoserine. The tract at residues 228–256 (ITESRPASAPPPSLSASVPPQATAGPSYP) is disordered. Lysine 394 carries the post-translational modification N6-succinyllysine.

It belongs to the 2-oxoacid dehydrogenase family. In terms of assembly, part of the inner core of the multimeric pyruvate dehydrogenase complex that is composed of about 48 DLAT and 12 PDHX molecules. This core binds multiple copies of pyruvate dehydrogenase (subunits PDH1A and PDHB, E1), dihydrolipoamide acetyltransferase (DLAT, E2) and lipoamide dehydrogenase (DLD, E3). Interacts with SIRT4. Interacts with DLD. Post-translationally, delipoylated at Lys-97 by SIRT4, delipoylation decreases the PHD complex activity.

It is found in the mitochondrion matrix. In terms of biological role, required for anchoring dihydrolipoamide dehydrogenase (E3) to the dihydrolipoamide transacetylase (E2) core of the pyruvate dehydrogenase complexes of eukaryotes. This specific binding is essential for a functional PDH complex. This Mus musculus (Mouse) protein is Pyruvate dehydrogenase protein X component, mitochondrial (Pdhx).